A 186-amino-acid chain; its full sequence is MDALGLSKLRHLKPRQLLSQVLNFALILSTAFMLWKGLSVATDSPSPIVVVLSGSMEPAFQRGDLLFLWNRNLELDSPPTPGTRVGEIVVYNVIGKDIPIVHRVVRKHQGPKTPLHLLTKGDNNHADDTELYARGRWYLDREKEVIGSVVGYVPFVGYVTIMLSEHPWMKTALLGIMGLLVIVQRE.

Topologically, residues 1–20 are cytoplasmic; sequence MDALGLSKLRHLKPRQLLSQ. The chain crosses the membrane as a helical; Signal-anchor for type II membrane protein span at residues 21–41; that stretch reads VLNFALILSTAFMLWKGLSVA. The Lumenal portion of the chain corresponds to 42-186; sequence TDSPSPIVVV…MGLLVIVQRE (145 aa). Residues Ser-55, His-102, and Asp-128 each act as charge relay system in the active site. The interval 172 to 183 is C-terminal short (CTS) helix; the sequence is ALLGIMGLLVIV.

It belongs to the peptidase S26B family. As to quaternary structure, component of the signal peptidase complex (SPC) composed of a catalytic subunit SEC11 and three accessory subunits SPC1, SPC2 and SPC3. The complex induces a local thinning of the ER membrane which is used to measure the length of the signal peptide (SP) h-region of protein substrates. This ensures the selectivity of the complex towards h-regions shorter than 18-20 amino acids. SPC associates with the translocon complex.

The protein localises to the endoplasmic reticulum membrane. It catalyses the reaction Cleavage of hydrophobic, N-terminal signal or leader sequences from secreted and periplasmic proteins.. Functionally, catalytic component of the signal peptidase complex (SPC) which catalyzes the cleavage of N-terminal signal sequences from nascent proteins as they are translocated into the lumen of the endoplasmic reticulum. Specifically cleaves N-terminal signal peptides that contain a hydrophobic alpha-helix (h-region) shorter than 18-20 amino acids. The chain is Signal peptidase complex catalytic subunit SEC11 (SEC11) from Tuber melanosporum (strain Mel28) (Perigord black truffle).